The following is a 239-amino-acid chain: 1-(5-phosphoribosyl)-5-[(5-phosphoribosylamino)methylideneamino] imidazole-4-carboxamide isomerase (239 aa).

Catalysis depends on aspartate 12, which acts as the Proton acceptor. Aspartate 132 (proton donor) is an active-site residue.

It belongs to the HisA/HisF family.

It localises to the cytoplasm. The enzyme catalyses 1-(5-phospho-beta-D-ribosyl)-5-[(5-phospho-beta-D-ribosylamino)methylideneamino]imidazole-4-carboxamide = 5-[(5-phospho-1-deoxy-D-ribulos-1-ylimino)methylamino]-1-(5-phospho-beta-D-ribosyl)imidazole-4-carboxamide. The protein operates within amino-acid biosynthesis; L-histidine biosynthesis; L-histidine from 5-phospho-alpha-D-ribose 1-diphosphate: step 4/9. This Natronomonas pharaonis (strain ATCC 35678 / DSM 2160 / CIP 103997 / JCM 8858 / NBRC 14720 / NCIMB 2260 / Gabara) (Halobacterium pharaonis) protein is 1-(5-phosphoribosyl)-5-[(5-phosphoribosylamino)methylideneamino] imidazole-4-carboxamide isomerase.